Reading from the N-terminus, the 261-residue chain is MYLRAVHAETHIPLLQQFIRDNPLGILTTAIKSPNYPLLQSSHIPFVLDIPDTPTDKANSDLTPGTLRGHIAKQNPQAKALMEALAQHQAQTQSTTLELPDEVLILFNGPHHHYVTPKFYKDTKPATGKVVPTWNYSAVQAYGKITVYCDSKAEETGAFLSRQVNDLSRHAETAIMGYTGGERPGPWEVSDAPENYIELLKKNIIGVKVRIERLQGKFKMSQEMGAGDREGVIEGFEKLGTEVGMGIAKTVKERGDMKDKK.

This sequence belongs to the PaiB family.

This is an uncharacterized protein from Aspergillus fumigatus (strain ATCC MYA-4609 / CBS 101355 / FGSC A1100 / Af293) (Neosartorya fumigata).